The sequence spans 172 residues: Adenine phosphoribosyltransferase (172 aa).

Belongs to the purine/pyrimidine phosphoribosyltransferase family. Homodimer.

The protein resides in the cytoplasm. The catalysed reaction is AMP + diphosphate = 5-phospho-alpha-D-ribose 1-diphosphate + adenine. The protein operates within purine metabolism; AMP biosynthesis via salvage pathway; AMP from adenine: step 1/1. Functionally, catalyzes a salvage reaction resulting in the formation of AMP, that is energically less costly than de novo synthesis. The protein is Adenine phosphoribosyltransferase of Prochlorococcus marinus (strain MIT 9215).